The sequence spans 488 residues: Ribulose bisphosphate carboxylase large chain (488 aa).

2 residues coordinate substrate: Asn-127 and Thr-177. Lys-179 serves as the catalytic Proton acceptor. Substrate is bound at residue Lys-181. 3 residues coordinate Mg(2+): Lys-205, Asp-207, and Glu-208. N6-carboxylysine is present on Lys-205. The active-site Proton acceptor is the His-297. Arg-298, His-330, and Ser-382 together coordinate substrate.

Belongs to the RuBisCO large chain family. Type I subfamily. Heterohexadecamer of 8 large chains and 8 small chains. The cofactor is Mg(2+).

Its subcellular location is the plastid. The protein resides in the chloroplast. It carries out the reaction 2 (2R)-3-phosphoglycerate + 2 H(+) = D-ribulose 1,5-bisphosphate + CO2 + H2O. It catalyses the reaction D-ribulose 1,5-bisphosphate + O2 = 2-phosphoglycolate + (2R)-3-phosphoglycerate + 2 H(+). Its function is as follows. RuBisCO catalyzes two reactions: the carboxylation of D-ribulose 1,5-bisphosphate, the primary event in carbon dioxide fixation, as well as the oxidative fragmentation of the pentose substrate in the photorespiration process. Both reactions occur simultaneously and in competition at the same active site. This Guillardia theta (Cryptophyte) protein is Ribulose bisphosphate carboxylase large chain.